We begin with the raw amino-acid sequence, 163 residues long: MKIAVYPGSFDPITNGHLDVIQRAAQVFDQVVVAVAHSSTKEPLFSIEERLDMLRVVLQKLPNVRVDAYRGLTVRYAREQGARALIRGLRAVSDFEYEFTMALTNKKLAPEIETVFLMTEAKYSFISSGSVKEVARYGGCLEDMVPVPVERILRDKFGMRGEG.

Ser-9 contacts substrate. Residues 9–10 (SF) and His-17 contribute to the ATP site. Substrate is bound by residues Lys-41, Thr-73, and Arg-87. ATP contacts are provided by residues 88–90 (GLR), Glu-98, and 123–129 (YSFISSG).

The protein belongs to the bacterial CoaD family. As to quaternary structure, homohexamer. Requires Mg(2+) as cofactor.

Its subcellular location is the cytoplasm. It catalyses the reaction (R)-4'-phosphopantetheine + ATP + H(+) = 3'-dephospho-CoA + diphosphate. It functions in the pathway cofactor biosynthesis; coenzyme A biosynthesis; CoA from (R)-pantothenate: step 4/5. In terms of biological role, reversibly transfers an adenylyl group from ATP to 4'-phosphopantetheine, yielding dephospho-CoA (dPCoA) and pyrophosphate. The sequence is that of Phosphopantetheine adenylyltransferase from Desulforudis audaxviator (strain MP104C).